The following is a 283-amino-acid chain: Bifunctional protein FolD (283 aa).

NADP(+) is bound by residues Gly165–Gly167, Thr192, and Val233.

It belongs to the tetrahydrofolate dehydrogenase/cyclohydrolase family. As to quaternary structure, homodimer.

The enzyme catalyses (6R)-5,10-methylene-5,6,7,8-tetrahydrofolate + NADP(+) = (6R)-5,10-methenyltetrahydrofolate + NADPH. It carries out the reaction (6R)-5,10-methenyltetrahydrofolate + H2O = (6R)-10-formyltetrahydrofolate + H(+). The protein operates within one-carbon metabolism; tetrahydrofolate interconversion. Its function is as follows. Catalyzes the oxidation of 5,10-methylenetetrahydrofolate to 5,10-methenyltetrahydrofolate and then the hydrolysis of 5,10-methenyltetrahydrofolate to 10-formyltetrahydrofolate. The protein is Bifunctional protein FolD of Thermobifida fusca (strain YX).